The chain runs to 325 residues: Histone deacetylase 8 (325 aa).

Residues 1–272 (MSRVVKPKVA…WTYLTALIVG (272 aa)) are histone deacetylase. Asp49 provides a ligand contact to substrate. His91 functions as the Proton acceptor in the catalytic mechanism. Gly99 is a substrate binding site. A divalent metal cation-binding residues include Asp126, His128, and Asp215. Residue Tyr254 coordinates substrate.

This sequence belongs to the histone deacetylase family. HD type 1 subfamily. Requires a divalent metal cation as cofactor.

Its subcellular location is the nucleus. It is found in the chromosome. The protein resides in the cytoplasm. The catalysed reaction is N(6)-acetyl-L-lysyl-[histone] + H2O = L-lysyl-[histone] + acetate. The enzyme catalyses N(6)-acetyl-L-lysyl-[protein] + H2O = L-lysyl-[protein] + acetate. It carries out the reaction N(6)-(2E)-butenoyl-L-lysyl-[protein] + H2O = (2E)-2-butenoate + L-lysyl-[protein]. With respect to regulation, its activity is inhibited by trichostatin A (TSA) and butyrate, 2 well known histone deacetylase inhibitors. Its function is as follows. Histone deacetylase that catalyzes the deacetylation of lysine residues on the N-terminal part of the core histones (H2A, H2B, H3 and H4). Histone deacetylation gives a tag for epigenetic repression and plays an important role in transcriptional regulation, cell cycle progression and developmental events. Histone deacetylases act via the formation of large multiprotein complexes. Also involved in the deacetylation of non-histone proteins. In addition to protein deacetylase activity, also has protein-lysine deacylase activity: acts as a protein decrotonylase by mediating decrotonylation ((2E)-butenoyl) of histones. The chain is Histone deacetylase 8 (hdac8) from Xenopus laevis (African clawed frog).